The following is a 130-amino-acid chain: Probable 4-amino-4-deoxy-L-arabinose-phosphoundecaprenol flippase subunit ArnF (130 aa).

At 1-4 the chain is on the cytoplasmic side; the sequence is MRGY. A helical membrane pass occupies residues 5 to 25; that stretch reads AWGAASVLLVTLAQLLMKWGM. The Periplasmic portion of the chain corresponds to 26–47; the sequence is AQIPLMSFADVTLNLFMQYWLP. The chain crosses the membrane as a helical span at residues 48–68; the sequence is LVVVSGGIFGYALSMLCWFFA. Over 69–77 the chain is Cytoplasmic; sequence LHHLPLNRA. A helical membrane pass occupies residues 78–98; it reads YPLLSVSYALVYLAAVILPWF. N99 is a topological domain (periplasmic). Residues 100 to 120 traverse the membrane as a helical segment; the sequence is ESATLLKTLGTLFILFGVWLI. Residues 121-130 are Cytoplasmic-facing; it reads NSQAKVKTPQ.

Belongs to the ArnF family. Heterodimer of ArnE and ArnF.

It is found in the cell inner membrane. It functions in the pathway bacterial outer membrane biogenesis; lipopolysaccharide biosynthesis. Functionally, translocates 4-amino-4-deoxy-L-arabinose-phosphoundecaprenol (alpha-L-Ara4N-phosphoundecaprenol) from the cytoplasmic to the periplasmic side of the inner membrane. The polypeptide is Probable 4-amino-4-deoxy-L-arabinose-phosphoundecaprenol flippase subunit ArnF (Serratia proteamaculans (strain 568)).